We begin with the raw amino-acid sequence, 419 residues long: Hyaluronan synthase (419 aa).

The next 5 helical transmembrane spans lie at 8-28 (LIVL…MYLF), 33-53 (VGIY…LSFL), 318-338 (IVAL…VAIG), 345-365 (AIQL…IVAL), and 376-396 (PASF…LQPL).

The protein belongs to the NodC/HAS family. Mg(2+) is required as a cofactor.

The protein localises to the cell membrane. It catalyses the reaction [hyaluronan](n) + UDP-N-acetyl-alpha-D-glucosamine = N-acetyl-beta-D-glucosaminyl-(1-&gt;4)-[hyaluronan](n) + UDP + H(+). The catalysed reaction is N-acetyl-beta-D-glucosaminyl-(1-&gt;4)-[hyaluronan](n) + UDP-alpha-D-glucuronate = [hyaluronan](n+1) + UDP + H(+). It participates in glycan biosynthesis; hyaluronan biosynthesis. Functionally, glycosaminoglycan synthesis. The hyaluronic acid capsule is involved in the pathogenicity of group A Streptococci; it may be the major virulence determinant. The chain is Hyaluronan synthase (hasA) from Streptococcus pyogenes serotype M1.